The primary structure comprises 100 residues: UPF0213 protein YhbQ (100 aa).

Residues 2-77 enclose the GIY-YIG domain; the sequence is TPWYLYLIRT…KQLTKRQKER (76 aa).

This sequence belongs to the UPF0213 family.

The sequence is that of UPF0213 protein YhbQ from Escherichia coli O8 (strain IAI1).